Here is a 602-residue protein sequence, read N- to C-terminus: Sodium- and chloride-dependent GABA transporter 2 (602 aa).

Residues 1–40 (MENRASGTTSNGETKPVCPAMEKVEEDGTLEREHWNNKME) lie on the Cytoplasmic side of the membrane. 3 helical membrane passes run 41-61 (FVLS…FPYL), 68-88 (GAFF…VFFL), and 121-141 (IVSL…FYLF). The Extracellular portion of the chain corresponds to 142–206 (SSFTTDLPWG…GIQHLGSLRW (65 aa)). Cysteine 153 and cysteine 162 are oxidised to a cystine. 3 N-linked (GlcNAc...) asparagine glycosylation sites follow: asparagine 169, asparagine 173, and asparagine 178. The next 2 membrane-spanning stretches (helical) occupy residues 207–227 (ELVL…WKGV) and 233–253 (VVYF…IRGV). The N-linked (GlcNAc...) asparagine glycan is linked to asparagine 269. A run of 7 helical transmembrane segments spans residues 282–302 (AGTQ…ALGS), 319–339 (ILNS…LGFM), 366–386 (VVML…VVLL), 418–438 (VLIL…LTEG), 453–473 (GMCL…VYGA), 490–510 (PLIK…TFLF), and 528–548 (WWGD…IPAW). Residues 549–602 (SIYKLRTLKGPLRERLRQLVCPAEDLPQKNQPEPTAPATPMTSLLRLTELESNC) lie on the Cytoplasmic side of the membrane. Threonine 587 is modified (phosphothreonine). The residue at position 591 (serine 591) is a Phosphoserine.

It belongs to the sodium:neurotransmitter symporter (SNF) (TC 2.A.22) family. SLC6A13 subfamily. Expressed at high levels in liver, followed by kidney and leptomeninges, and very low levels in the cerebellum (at protein level). In the brain, detected in some blood vessels (at protein level). In the kidney, expressed in the cortex, including parts of the proximal tubules, but not in the medulla (at protein level). In the liver, highest expression in periportal hepatocytes, with highest density at the vascular side (at protein level). Also detected at low levels in other organs, including skeletal muscle.

It is found in the cell membrane. The protein localises to the basolateral cell membrane. It carries out the reaction 4-aminobutanoate(out) + chloride(out) + 2 Na(+)(out) = 4-aminobutanoate(in) + chloride(in) + 2 Na(+)(in). The enzyme catalyses taurine(out) + chloride(out) + 2 Na(+)(out) = taurine(in) + chloride(in) + 2 Na(+)(in). The catalysed reaction is beta-alanine(out) + chloride(out) + 2 Na(+)(out) = beta-alanine(in) + chloride(in) + 2 Na(+)(in). It catalyses the reaction hypotaurine(out) + chloride(out) + 2 Na(+)(out) = hypotaurine(in) + chloride(in) + 2 Na(+)(in). Gamma-aminobutyric acid (GABA) transport is inhibited by beta-alanine, taurine, hypotaurine, beta-guanidinopropionic acid, 2,3-diaminopropionic acid, guvacine and nipecotic acid. Beta-alanine transport is inhibited by GABA. Taurine transport is inhibited by GABA, beta-alanine, SNAP-5114, nigericin, nipecotic acid and ouabain. Its function is as follows. Mediates sodium- and chloride-dependent transport of gamma-aminobutyric acid (GABA). Can also mediate transport of beta-alanine, taurine and hypotaurine and is the major taurine transporter in hepatocytes. The sequence is that of Sodium- and chloride-dependent GABA transporter 2 (Slc6a13) from Mus musculus (Mouse).